The sequence spans 292 residues: ATP synthase gamma chain (292 aa).

Belongs to the ATPase gamma chain family. As to quaternary structure, F-type ATPases have 2 components, CF(1) - the catalytic core - and CF(0) - the membrane proton channel. CF(1) has five subunits: alpha(3), beta(3), gamma(1), delta(1), epsilon(1). CF(0) has three main subunits: a, b and c.

Its subcellular location is the cell inner membrane. In terms of biological role, produces ATP from ADP in the presence of a proton gradient across the membrane. The gamma chain is believed to be important in regulating ATPase activity and the flow of protons through the CF(0) complex. This chain is ATP synthase gamma chain, found in Nautilia profundicola (strain ATCC BAA-1463 / DSM 18972 / AmH).